A 480-amino-acid chain; its full sequence is Glycogen synthase (480 aa).

Lys-15 serves as a coordination point for ADP-alpha-D-glucose.

This sequence belongs to the glycosyltransferase 1 family. Bacterial/plant glycogen synthase subfamily.

The catalysed reaction is [(1-&gt;4)-alpha-D-glucosyl](n) + ADP-alpha-D-glucose = [(1-&gt;4)-alpha-D-glucosyl](n+1) + ADP + H(+). The protein operates within glycan biosynthesis; glycogen biosynthesis. Synthesizes alpha-1,4-glucan chains using ADP-glucose. The protein is Glycogen synthase of Clostridioides difficile (strain 630) (Peptoclostridium difficile).